Reading from the N-terminus, the 87-residue chain is UPF0473 protein Dred_0776 (87 aa).

The protein belongs to the UPF0473 family.

This is UPF0473 protein Dred_0776 from Desulforamulus reducens (strain ATCC BAA-1160 / DSM 100696 / MI-1) (Desulfotomaculum reducens).